We begin with the raw amino-acid sequence, 202 residues long: Large ribosomal subunit protein bL25 (202 aa).

It belongs to the bacterial ribosomal protein bL25 family. CTC subfamily. Part of the 50S ribosomal subunit; part of the 5S rRNA/L5/L18/L25 subcomplex. Contacts the 5S rRNA. Binds to the 5S rRNA independently of L5 and L18.

Functionally, this is one of the proteins that binds to the 5S RNA in the ribosome where it forms part of the central protuberance. The chain is Large ribosomal subunit protein bL25 from Chlorobium luteolum (strain DSM 273 / BCRC 81028 / 2530) (Pelodictyon luteolum).